Here is a 466-residue protein sequence, read N- to C-terminus: Siroheme synthase (466 aa).

Residues 1–203 (MNYLPIFIDI…GKIQEAKADL (203 aa)) are precorrin-2 dehydrogenase /sirohydrochlorin ferrochelatase. Residues 22 to 23 (SI) and 43 to 44 (KS) contribute to the NAD(+) site. Phosphoserine is present on Ser128. The uroporphyrinogen-III C-methyltransferase stretch occupies residues 216-466 (GAVYLVGGGP…FDAKPISSKK (251 aa)). Pro225 serves as a coordination point for S-adenosyl-L-methionine. Catalysis depends on Asp248, which acts as the Proton acceptor. Catalysis depends on Lys270, which acts as the Proton donor. Residues 301-303 (GGD), Ile306, 331-332 (TA), Met383, and Gly412 each bind S-adenosyl-L-methionine.

In the N-terminal section; belongs to the precorrin-2 dehydrogenase / sirohydrochlorin ferrochelatase family. The protein in the C-terminal section; belongs to the precorrin methyltransferase family.

It carries out the reaction uroporphyrinogen III + 2 S-adenosyl-L-methionine = precorrin-2 + 2 S-adenosyl-L-homocysteine + H(+). The enzyme catalyses precorrin-2 + NAD(+) = sirohydrochlorin + NADH + 2 H(+). The catalysed reaction is siroheme + 2 H(+) = sirohydrochlorin + Fe(2+). It participates in cofactor biosynthesis; adenosylcobalamin biosynthesis; precorrin-2 from uroporphyrinogen III: step 1/1. Its pathway is cofactor biosynthesis; adenosylcobalamin biosynthesis; sirohydrochlorin from precorrin-2: step 1/1. The protein operates within porphyrin-containing compound metabolism; siroheme biosynthesis; precorrin-2 from uroporphyrinogen III: step 1/1. It functions in the pathway porphyrin-containing compound metabolism; siroheme biosynthesis; siroheme from sirohydrochlorin: step 1/1. It participates in porphyrin-containing compound metabolism; siroheme biosynthesis; sirohydrochlorin from precorrin-2: step 1/1. Functionally, multifunctional enzyme that catalyzes the SAM-dependent methylations of uroporphyrinogen III at position C-2 and C-7 to form precorrin-2 via precorrin-1. Then it catalyzes the NAD-dependent ring dehydrogenation of precorrin-2 to yield sirohydrochlorin. Finally, it catalyzes the ferrochelation of sirohydrochlorin to yield siroheme. This chain is Siroheme synthase, found in Vesicomyosocius okutanii subsp. Calyptogena okutanii (strain HA).